Consider the following 148-residue polypeptide: Large ribosomal subunit protein bL19 (148 aa).

This sequence belongs to the bacterial ribosomal protein bL19 family.

Its function is as follows. This protein is located at the 30S-50S ribosomal subunit interface and may play a role in the structure and function of the aminoacyl-tRNA binding site. The sequence is that of Large ribosomal subunit protein bL19 from Beijerinckia indica subsp. indica (strain ATCC 9039 / DSM 1715 / NCIMB 8712).